Consider the following 213-residue polypeptide: Adenylate kinase (213 aa).

ATP is bound at residue 14–19 (GSGKGT). Residues 34-63 (SSGNLLRSAIKASTPLGIKASEYIDEGQLV) form an NMP region. AMP is bound by residues Ser35, Arg40, 61 to 63 (QLV), 89 to 92 (GFPR), and Gln96. The tract at residues 129-162 (SRFICPSCNFVYNQSQGFRECPTCHSELVRRSDD) is LID. Arg130 contributes to the ATP binding site. Zn(2+)-binding residues include Cys133 and Cys136. Residue 139–140 (VY) coordinates ATP. Residues Cys149 and Cys152 each contribute to the Zn(2+) site. AMP is bound by residues Arg159 and Arg170. Lys198 lines the ATP pocket.

Belongs to the adenylate kinase family. Monomer.

The protein localises to the cytoplasm. It catalyses the reaction AMP + ATP = 2 ADP. The protein operates within purine metabolism; AMP biosynthesis via salvage pathway; AMP from ADP: step 1/1. In terms of biological role, catalyzes the reversible transfer of the terminal phosphate group between ATP and AMP. Plays an important role in cellular energy homeostasis and in adenine nucleotide metabolism. The protein is Adenylate kinase of Chlamydia felis (strain Fe/C-56) (Chlamydophila felis).